The following is a 186-amino-acid chain: Elongation factor P (186 aa).

Belongs to the elongation factor P family.

It is found in the cytoplasm. It functions in the pathway protein biosynthesis; polypeptide chain elongation. Its function is as follows. Involved in peptide bond synthesis. Stimulates efficient translation and peptide-bond synthesis on native or reconstituted 70S ribosomes in vitro. Probably functions indirectly by altering the affinity of the ribosome for aminoacyl-tRNA, thus increasing their reactivity as acceptors for peptidyl transferase. In Neisseria meningitidis serogroup A / serotype 4A (strain DSM 15465 / Z2491), this protein is Elongation factor P.